We begin with the raw amino-acid sequence, 297 residues long: Homoserine kinase (297 aa).

An ATP-binding site is contributed by 82–92 (PLTRGLGSSAS).

The protein belongs to the GHMP kinase family. Homoserine kinase subfamily.

Its subcellular location is the cytoplasm. It catalyses the reaction L-homoserine + ATP = O-phospho-L-homoserine + ADP + H(+). Its pathway is amino-acid biosynthesis; L-threonine biosynthesis; L-threonine from L-aspartate: step 4/5. Functionally, catalyzes the ATP-dependent phosphorylation of L-homoserine to L-homoserine phosphate. The protein is Homoserine kinase of Bacillus cereus (strain B4264).